We begin with the raw amino-acid sequence, 359 residues long: Phosphoserine aminotransferase (359 aa).

Arg41 serves as a coordination point for L-glutamate. Residues 75-76 (AS), Trp101, Thr152, Asp171, and Gln194 each bind pyridoxal 5'-phosphate. Residue Lys195 is modified to N6-(pyridoxal phosphate)lysine. Residue 236-237 (NT) coordinates pyridoxal 5'-phosphate.

It belongs to the class-V pyridoxal-phosphate-dependent aminotransferase family. SerC subfamily. As to quaternary structure, homodimer. It depends on pyridoxal 5'-phosphate as a cofactor.

The protein localises to the cytoplasm. It carries out the reaction O-phospho-L-serine + 2-oxoglutarate = 3-phosphooxypyruvate + L-glutamate. The enzyme catalyses 4-(phosphooxy)-L-threonine + 2-oxoglutarate = (R)-3-hydroxy-2-oxo-4-phosphooxybutanoate + L-glutamate. It participates in amino-acid biosynthesis; L-serine biosynthesis; L-serine from 3-phospho-D-glycerate: step 2/3. Its pathway is cofactor biosynthesis; pyridoxine 5'-phosphate biosynthesis; pyridoxine 5'-phosphate from D-erythrose 4-phosphate: step 3/5. Its function is as follows. Catalyzes the reversible conversion of 3-phosphohydroxypyruvate to phosphoserine and of 3-hydroxy-2-oxo-4-phosphonooxybutanoate to phosphohydroxythreonine. This is Phosphoserine aminotransferase from Acinetobacter baumannii (strain ACICU).